A 718-amino-acid chain; its full sequence is Methionine--tRNA ligase (718 aa).

Positions 27 to 37 (PYANGQIHIGH) match the 'HIGH' region motif. Zn(2+) contacts are provided by cysteine 158, cysteine 161, cysteine 171, and cysteine 174. A 'KMSKS' region motif is present at residues 348-352 (KMSKS). Lysine 351 serves as a coordination point for ATP. A tRNA-binding domain is found at 612 to 718 (DFAKIDLRIA…SGAKPGMRVK (107 aa)).

This sequence belongs to the class-I aminoacyl-tRNA synthetase family. MetG type 1 subfamily. In terms of assembly, homodimer. Requires Zn(2+) as cofactor.

The protein localises to the cytoplasm. The enzyme catalyses tRNA(Met) + L-methionine + ATP = L-methionyl-tRNA(Met) + AMP + diphosphate. Functionally, is required not only for elongation of protein synthesis but also for the initiation of all mRNA translation through initiator tRNA(fMet) aminoacylation. In Burkholderia cenocepacia (strain ATCC BAA-245 / DSM 16553 / LMG 16656 / NCTC 13227 / J2315 / CF5610) (Burkholderia cepacia (strain J2315)), this protein is Methionine--tRNA ligase.